Consider the following 131-residue polypeptide: UPF0102 protein H16_A3579 (131 aa).

It belongs to the UPF0102 family.

The protein is UPF0102 protein H16_A3579 of Cupriavidus necator (strain ATCC 17699 / DSM 428 / KCTC 22496 / NCIMB 10442 / H16 / Stanier 337) (Ralstonia eutropha).